A 203-amino-acid chain; its full sequence is ATP-dependent Clp protease proteolytic subunit (203 aa).

Catalysis depends on serine 103, which acts as the Nucleophile. Histidine 128 is a catalytic residue.

This sequence belongs to the peptidase S14 family. As to quaternary structure, fourteen ClpP subunits assemble into 2 heptameric rings which stack back to back to give a disk-like structure with a central cavity, resembling the structure of eukaryotic proteasomes.

It localises to the cytoplasm. The catalysed reaction is Hydrolysis of proteins to small peptides in the presence of ATP and magnesium. alpha-casein is the usual test substrate. In the absence of ATP, only oligopeptides shorter than five residues are hydrolyzed (such as succinyl-Leu-Tyr-|-NHMec, and Leu-Tyr-Leu-|-Tyr-Trp, in which cleavage of the -Tyr-|-Leu- and -Tyr-|-Trp bonds also occurs).. Cleaves peptides in various proteins in a process that requires ATP hydrolysis. Has a chymotrypsin-like activity. Plays a major role in the degradation of misfolded proteins. This is ATP-dependent Clp protease proteolytic subunit from Nitrosococcus oceani (strain ATCC 19707 / BCRC 17464 / JCM 30415 / NCIMB 11848 / C-107).